The chain runs to 1367 residues: MKKIENLKWKNVSFKSLEIDPDAGVVLVSVEKFSEEIEDLVRLLEKKTRFRVIVNGVQKSNGDLRGKILSLLNGNVPYIKDVVFEGNRLILKVLGDFARDRIASKLRSTKKQLDELLPPGTEIMLEVVEPPEDLLKKEVPQPEKREEPKGEELKIEDENHIFGQKPRKIVFTPSKIFEYNKKTSVKGKIFKIEKIEGKRTVLLIYLTDGEDSLICKVFNDVEKVEGKVSVGDVIVATGDLLLENGEPTLYVKGITKLPEAKRMDKSPVKRVELHAHTKFSDQDAITDVNEYVKRAKEWGFPAIALTDHGNVQAIPYFYDAAKEAGIKPIFGIEAYLVSDVEPVIRNLSDDSTFGDATFVVLDFETTGLDPQVDEIIEIGAVKIQGGQIVDEYHTLIKPSREISRKSSEITGITQEMLENKRSIEEVLPEFLGFLEDSIIVAHNANFDYRFLRLWIKKVMGLDWERPYIDTLALAKSLLKLRSYSLDSVVEKLGLGPFRHHRALDDARVTAQVFLRFVEMMKKIGITKLSEMEKLKDTIDYTALKPFHCTILVQNKKGLKNLYKLVSDSYIKYFYGVPRILKSELIENREGLLVGSACISGELGRAALEGASDSELEEIAKFYDYIEVMPLDVIAEDEEDLDRERLKEVYRKLYRIAKKLNKFVVMTGDVHFLDPEDARGRAALLAPQGNRNFENQPALYLRTTEEMLEKAIEIFEDEEIAREVVIENPNRIADMIEEVQPLEKKLHPPIIENADEIVRNLTMKRAYEIYGDPLPEIVQKRVEKELNAIINHGYAVLYLIAQELVQKSMSDGYVVGSRGSVGSSLVANLLGITEVNPLPPHYRCPECKYFEVVEDDRYGAGYDLPNKNCPRCGAPLRKDGHGIPFETFMGFEGDKVPDIDLNFSGEYQERAHRFVEELFGKDHVYRAGTINTIAERSAVGYVRSYEEKTGKKLRKAEMERLVSMITGVKRTTGQHPGGLMIIPKDKEVYDFTPIQYPANDRNAGVFTTHFAYETIHDDLVKIDALGHDDPTFIKMLKDLTGIDPMTIPMDDPDTLAIFSSVKPLGVDPVELESDVGTYGIPEFGTEFVRGMLVETRPKSFAELVRISGLSHGTDVWLNNARDWINLGYAKLSEVISCRDDIMNFLIHKGMEPSLAFKIMENVRKGKGITEEMESEMRRLKVPEWFIESCKRIKYLFPKAHAVAYVSMAFRIAYFKVHYPLQFYAAYFTIKGDQFDPVLVLRGKEAIKRRLRELKAMPAKDAQKKNEVSVLEVALEMILRGFSFLPPDIFKSDAKKFLIEGNSLRIPFNKLPGLGDSVAESIIRAREEKPFTSVEDLMKRTKVNKNHIELMKSLGVLGDLPETEQFTLF.

The 156-residue stretch at 358-513 folds into the Exonuclease domain; that stretch reads FVVLDFETTG…DDARVTAQVF (156 aa).

This sequence belongs to the DNA polymerase type-C family. PolC subfamily.

It localises to the cytoplasm. It carries out the reaction DNA(n) + a 2'-deoxyribonucleoside 5'-triphosphate = DNA(n+1) + diphosphate. Functionally, required for replicative DNA synthesis. This DNA polymerase also exhibits 3' to 5' exonuclease activity. This chain is DNA polymerase III PolC-type, found in Thermotoga maritima (strain ATCC 43589 / DSM 3109 / JCM 10099 / NBRC 100826 / MSB8).